Consider the following 293-residue polypeptide: Glycine--tRNA ligase alpha subunit (293 aa).

Belongs to the class-II aminoacyl-tRNA synthetase family. In terms of assembly, tetramer of two alpha and two beta subunits.

It is found in the cytoplasm. The enzyme catalyses tRNA(Gly) + glycine + ATP = glycyl-tRNA(Gly) + AMP + diphosphate. The chain is Glycine--tRNA ligase alpha subunit from Aliarcobacter butzleri (strain RM4018) (Arcobacter butzleri).